Consider the following 57-residue polypeptide: UPF0391 membrane protein bsl5717 (57 aa).

The next 2 helical transmembrane spans lie at 6-26 (WALI…TGIS) and 35-55 (FLFY…LTIF).

Belongs to the UPF0391 family.

It is found in the cell membrane. This chain is UPF0391 membrane protein bsl5717, found in Bradyrhizobium diazoefficiens (strain JCM 10833 / BCRC 13528 / IAM 13628 / NBRC 14792 / USDA 110).